The chain runs to 238 residues: Ribonuclease HII (238 aa).

Positions 23–215 constitute an RNase H type-2 domain; it reads QRLCGVDEAG…VREALARLPM (193 aa). A divalent metal cation is bound by residues Asp-29, Glu-30, and Asp-124.

Belongs to the RNase HII family. Requires Mn(2+) as cofactor. The cofactor is Mg(2+).

It localises to the cytoplasm. It carries out the reaction Endonucleolytic cleavage to 5'-phosphomonoester.. Endonuclease that specifically degrades the RNA of RNA-DNA hybrids. The chain is Ribonuclease HII from Cupriavidus necator (strain ATCC 17699 / DSM 428 / KCTC 22496 / NCIMB 10442 / H16 / Stanier 337) (Ralstonia eutropha).